The sequence spans 293 residues: Mitochondrial glycine transporter (293 aa).

3 Solcar repeats span residues 6–85, 102–186, and 208–291; these read GGVP…SRSA, LQSY…AKEM, and ASAM…LLKL. Helical transmembrane passes span 12-37, 60-86, 108-133, 161-184, 212-238, and 266-284; these read LVSG…TRLQ, GTLP…RSAL, LLTG…VRYE, GAAA…EQAK, VNGV…KTRM, and GLSL…AWGI.

It belongs to the mitochondrial carrier (TC 2.A.29) family. SLC25A38 subfamily.

It localises to the mitochondrion inner membrane. The enzyme catalyses glycine(in) = glycine(out). Functionally, mitochondrial glycine transporter that imports glycine into the mitochondrial matrix. Plays an important role in providing glycine for the first enzymatic step in heme biosynthesis, the condensation of glycine with succinyl-CoA to produce 5-aminolevulinate (ALA) in the mitochondrial matrix. This chain is Mitochondrial glycine transporter, found in Eremothecium gossypii (strain ATCC 10895 / CBS 109.51 / FGSC 9923 / NRRL Y-1056) (Yeast).